Here is a 224-residue protein sequence, read N- to C-terminus: dTTP/UTP pyrophosphatase (224 aa).

The active-site Proton acceptor is Asp77.

The protein belongs to the Maf family. YhdE subfamily. A divalent metal cation is required as a cofactor.

The protein localises to the cytoplasm. It catalyses the reaction dTTP + H2O = dTMP + diphosphate + H(+). The catalysed reaction is UTP + H2O = UMP + diphosphate + H(+). Nucleoside triphosphate pyrophosphatase that hydrolyzes dTTP and UTP. May have a dual role in cell division arrest and in preventing the incorporation of modified nucleotides into cellular nucleic acids. This is dTTP/UTP pyrophosphatase from Dehalococcoides mccartyi (strain ATCC BAA-2266 / KCTC 15142 / 195) (Dehalococcoides ethenogenes (strain 195)).